A 394-amino-acid chain; its full sequence is Chorismate synthase (394 aa).

The NADP(+) site is built by R42 and R48. FMN is bound by residues 137–139 (RAS), 258–259 (QA), G302, 317–321 (KPIAT), and R343.

This sequence belongs to the chorismate synthase family. Homotetramer. The cofactor is FMNH2.

It catalyses the reaction 5-O-(1-carboxyvinyl)-3-phosphoshikimate = chorismate + phosphate. It participates in metabolic intermediate biosynthesis; chorismate biosynthesis; chorismate from D-erythrose 4-phosphate and phosphoenolpyruvate: step 7/7. Functionally, catalyzes the anti-1,4-elimination of the C-3 phosphate and the C-6 proR hydrogen from 5-enolpyruvylshikimate-3-phosphate (EPSP) to yield chorismate, which is the branch point compound that serves as the starting substrate for the three terminal pathways of aromatic amino acid biosynthesis. This reaction introduces a second double bond into the aromatic ring system. The chain is Chorismate synthase from Streptomyces avermitilis (strain ATCC 31267 / DSM 46492 / JCM 5070 / NBRC 14893 / NCIMB 12804 / NRRL 8165 / MA-4680).